Reading from the N-terminus, the 1531-residue chain is DNA topoisomerase 2-alpha (1531 aa).

Position 1 is an N-acetylmethionine (M1). Residue S4 is modified to Phosphoserine. K17 participates in a covalent cross-link: Glycyl lysine isopeptide (Lys-Gly) (interchain with G-Cter in SUMO2). Residues N91, N120, and 148–150 (SSN) contribute to the ATP site. Residues K156 and K157 each participate in a glycyl lysine isopeptide (Lys-Gly) (interchain with G-Cter in SUMO2) cross-link. ATP is bound at residue 161-168 (GRNGYGAK). K261 participates in a covalent cross-link: Glycyl lysine isopeptide (Lys-Gly) (interchain with G-Cter in SUMO2). A Phosphothreonine modification is found at T282. The interval 342–344 (KKK) is interaction with DNA. K352 participates in a covalent cross-link: Glycyl lysine isopeptide (Lys-Gly) (interchain with G-Cter in SUMO2). Position 376-378 (376-378 (QTK)) interacts with ATP. Residues K386, K397, K416, K418, K425, and K440 each participate in a glycyl lysine isopeptide (Lys-Gly) (interchain with G-Cter in SUMO2) cross-link. Residues 455–572 (CTLILTEGDS…SLLRHRFLEE (118 aa)) form the Toprim domain. E461 contributes to the Mg(2+) binding site. Residues K466, K480, and K529 each participate in a glycyl lysine isopeptide (Lys-Gly) (interchain with G-Cter in SUMO2) cross-link. Residues D541 and D543 each coordinate Mg(2+). Glycyl lysine isopeptide (Lys-Gly) (interchain with G-Cter in SUMO2) cross-links involve residues K584, K599, K614, K622, K625, K632, K639, K655, K662, and K676. The Topo IIA-type catalytic domain occupies 715–1171 (IPSMVDGLKP…SPSDLWKEDL (457 aa)). Residue Y805 is the O-(5'-phospho-DNA)-tyrosine intermediate of the active site. An interaction with DNA region spans residues 990–999 (KLQTSLTCNS). Positions 1018–1028 (ILRDFFELRLK) match the Nuclear export signal motif. Residue K1075 forms a Glycyl lysine isopeptide (Lys-Gly) (interchain with G-Cter in SUMO2) linkage. Disordered regions lie at residues 1090–1123 (WKEAQQKVPDEEENEESDNEKETEKSDSVTDSGP) and 1184–1531 (KEKQ…DDLF). Residues 1099–1108 (DEEENEESDN) are compositionally biased toward acidic residues. S1106 is modified (phosphoserine; by CK1). Glycyl lysine isopeptide (Lys-Gly) (interchain with G-Cter in SUMO2) cross-links involve residues K1114, K1196, and K1204. T1205 carries the post-translational modification Phosphothreonine. The residue at position 1213 (S1213) is a Phosphoserine. A Glycyl lysine isopeptide (Lys-Gly) (interchain with G-Cter in SUMO2) cross-link involves residue K1228. K1240 is covalently cross-linked (Glycyl lysine isopeptide (Lys-Gly) (interchain with G-Cter in SUMO1); alternate). A Glycyl lysine isopeptide (Lys-Gly) (interchain with G-Cter in SUMO2); alternate cross-link involves residue K1240. T1244 bears the Phosphothreonine mark. S1247 carries the post-translational modification Phosphoserine. A compositionally biased stretch (basic and acidic residues) spans 1256-1272 (EGLKQRLEKKQKREPGT). Glycyl lysine isopeptide (Lys-Gly) (interchain with G-Cter in SUMO2) cross-links involve residues K1259, K1276, K1283, and K1286. 4 positions are modified to phosphoserine: S1295, S1297, S1299, and S1302. At T1327 the chain carries Phosphothreonine. Residues 1330-1349 (LDSDEDFSDFDEKTDDEDFV) show a composition bias toward acidic residues. Phosphoserine occurs at positions 1332 and 1337. Position 1343 is a phosphothreonine; by PLK3 (T1343). 2 positions are modified to phosphoserine: S1351 and S1354. Residues K1363, K1367, and K1373 each participate in a glycyl lysine isopeptide (Lys-Gly) (interchain with G-Cter in SUMO2) cross-link. Residues S1374 and S1377 each carry the phosphoserine modification. A Glycyl lysine isopeptide (Lys-Gly) (interchain with G-Cter in SUMO2) cross-link involves residue K1385. A phosphoserine mark is found at S1387, S1391, S1392, and S1393. Residues 1406–1431 (TNPVPKKNVTVKKTAAKSQSSTSTTG) show a composition bias toward low complexity. K1422 participates in a covalent cross-link: Glycyl lysine isopeptide (Lys-Gly) (interchain with G-Cter in SUMO2); alternate. K1422 carries the N6-acetyllysine; alternate modification. The tract at residues 1433–1439 (KKRAAPK) is interaction with PLSCR1. K1442 participates in a covalent cross-link: Glycyl lysine isopeptide (Lys-Gly) (interchain with G-Cter in SUMO2); alternate. Position 1442 is an N6-acetyllysine; alternate (K1442). The residue at position 1449 (S1449) is a Phosphoserine. Glycyl lysine isopeptide (Lys-Gly) (interchain with G-Cter in SUMO2) cross-links involve residues K1454 and K1459. The residue at position 1469 (S1469) is a Phosphoserine; by CK2. T1470 carries the phosphothreonine modification. 3 positions are modified to phosphoserine: S1471, S1474, and S1476. Residues K1484 and K1492 each participate in a glycyl lysine isopeptide (Lys-Gly) (interchain with G-Cter in SUMO2) cross-link. Over residues 1491–1502 (SKGESDDFHMDF) the composition is skewed to basic and acidic residues. 3 positions are modified to phosphoserine: S1495, S1504, and S1525.

The protein belongs to the type II topoisomerase family. Homodimer. Interacts with COPS5. Interacts with RECQL5; this stimulates DNA decatenation. Interacts with SETMAR; stimulates the topoisomerase activity. Interacts with DHX9; this interaction occurs in a E2 enzyme UBE2I- and RNA-dependent manner, negatively regulates DHX9-mediated double-stranded DNA and RNA duplex helicase activity and stimulates TOP2A-mediated supercoiled DNA relaxation activity. Interacts with HNRNPU (via C-terminus); this interaction protects the topoisomerase TOP2A from degradation and positively regulates the relaxation of supercoiled DNA in a RNA-dependent manner. Interacts with MCM3AP isoform GANP. Interacts with ERCC6. Interacts with PLSCR1. Interacts with GCNA; this interaction allows the resolution of topoisomerase II (TOP2A) DNA-protein cross-links. Interacts with POL1RA/RPA1 (via dock II) and UBTF in the context of Pol I complex; may assist Pol I transcription initiation by releasing supercoils occurring during DNA unwinding. Interacts with TPRN; TPRN interacts with a number of DNA damage response proteins, is recruited to sites of DNA damage and may play a role in DNA damage repair. Mg(2+) serves as cofactor. The cofactor is Mn(2+). Ca(2+) is required as a cofactor. Phosphorylation has no effect on catalytic activity. However, phosphorylation at Ser-1106 by CSNK1D/CK1 promotes DNA cleavable complex formation. In terms of processing, (Microbial infection) Deubiquitinated by Epstein-Barr virus BPLF1; leading to stabilized SUMOylated TOP2A trapped in cleavage complexes, which halts the DNA damage response to TOP2A-induced double-strand DNA breaks. Post-translationally, SUMOylated. As to expression, expressed in the tonsil, spleen, lymph node, thymus, skin, pancreas, testis, colon, kidney, liver, brain and lung. Also found in high-grade lymphomas, squamous cell lung tumors and seminomas.

Its subcellular location is the cytoplasm. It localises to the nucleus. The protein resides in the nucleoplasm. It is found in the nucleolus. The catalysed reaction is ATP-dependent breakage, passage and rejoining of double-stranded DNA.. With respect to regulation, specifically inhibited by the intercalating agent amsacrine. Its function is as follows. Key decatenating enzyme that alters DNA topology by binding to two double-stranded DNA molecules, generating a double-stranded break in one of the strands, passing the intact strand through the broken strand, and religating the broken strand. May play a role in regulating the period length of BMAL1 transcriptional oscillation. The protein is DNA topoisomerase 2-alpha (TOP2A) of Homo sapiens (Human).